We begin with the raw amino-acid sequence, 318 residues long: NADH-ubiquinone oxidoreductase chain 1 (318 aa).

8 helical membrane-spanning segments follow: residues phenylalanine 3–leucine 23, valine 69–leucine 89, isoleucine 102–alanine 122, leucine 146–isoleucine 166, histidine 171–alanine 191, leucine 222–phenylalanine 242, glutamate 253–valine 273, and leucine 294–isoleucine 314.

It belongs to the complex I subunit 1 family. As to quaternary structure, core subunit of respiratory chain NADH dehydrogenase (Complex I) which is composed of 45 different subunits.

The protein resides in the mitochondrion inner membrane. It carries out the reaction a ubiquinone + NADH + 5 H(+)(in) = a ubiquinol + NAD(+) + 4 H(+)(out). Functionally, core subunit of the mitochondrial membrane respiratory chain NADH dehydrogenase (Complex I) which catalyzes electron transfer from NADH through the respiratory chain, using ubiquinone as an electron acceptor. Essential for the catalytic activity and assembly of complex I. In Cnephaeus nilssonii (Northern bat), this protein is NADH-ubiquinone oxidoreductase chain 1 (MT-ND1).